The chain runs to 350 residues: Hydroxymethylglutaryl-CoA synthase (350 aa).

Position 30 (aspartate 30) interacts with (3S)-3-hydroxy-3-methylglutaryl-CoA. The active-site Proton donor/acceptor is glutamate 82. 4 residues coordinate (3S)-3-hydroxy-3-methylglutaryl-CoA: cysteine 114, serine 155, threonine 203, and histidine 236. The active-site Acyl-thioester intermediate is the cysteine 114. Histidine 236 (proton donor/acceptor) is an active-site residue. Position 241 (arginine 241) interacts with CoA. Arginine 245, asparagine 268, and serine 298 together coordinate (3S)-3-hydroxy-3-methylglutaryl-CoA.

It belongs to the thiolase-like superfamily. Archaeal HMG-CoA synthase family. In terms of assembly, interacts with acetoacetyl-CoA thiolase that catalyzes the precedent step in the pathway and with a DUF35 protein. The acetoacetyl-CoA thiolase/HMG-CoA synthase complex channels the intermediate via a fused CoA-binding site, which allows for efficient coupling of the endergonic thiolase reaction with the exergonic HMGCS reaction.

It carries out the reaction acetoacetyl-CoA + acetyl-CoA + H2O = (3S)-3-hydroxy-3-methylglutaryl-CoA + CoA + H(+). It participates in metabolic intermediate biosynthesis; (R)-mevalonate biosynthesis; (R)-mevalonate from acetyl-CoA: step 2/3. Its function is as follows. Catalyzes the condensation of acetyl-CoA with acetoacetyl-CoA to form 3-hydroxy-3-methylglutaryl-CoA (HMG-CoA). Functions in the mevalonate (MVA) pathway leading to isopentenyl diphosphate (IPP), a key precursor for the biosynthesis of isoprenoid compounds that are building blocks of archaeal membrane lipids. This chain is Hydroxymethylglutaryl-CoA synthase, found in Pyrobaculum calidifontis (strain DSM 21063 / JCM 11548 / VA1).